The chain runs to 149 residues: Large ribosomal subunit protein uL15 (149 aa).

A disordered region spans residues 1–61; the sequence is MELNSLRPAL…GGQMPLQRRL (61 aa). Basic residues predominate over residues 30 to 39; the sequence is TATKGHKGQK.

Belongs to the universal ribosomal protein uL15 family. As to quaternary structure, part of the 50S ribosomal subunit.

Its function is as follows. Binds to the 23S rRNA. The chain is Large ribosomal subunit protein uL15 from Trichlorobacter lovleyi (strain ATCC BAA-1151 / DSM 17278 / SZ) (Geobacter lovleyi).